The sequence spans 322 residues: Cysteine protease yopT1 (322 aa).

The disordered stretch occupies residues 42–69 (LSHSNRQKKLSATIKHNQSSRSMLDRKL). Active-site residues include Cys-139, His-258, and Asp-274.

This sequence belongs to the peptidase C58 family. Interacts with human ARHA.

It is found in the secreted. Its function is as follows. Cysteine protease, which is translocated into infected cells and plays a central role in pathogenesis by cleaving the C-terminus end of the human small GTPase RhoA/ARHA, a regulator of cytoskeleton. Once cleaved, ARHA loses its lipid modification, and is released from the cell membrane, leading to the subsequent disruption of actin cytoskeleton of the host cell. The protein is Cysteine protease yopT1 (yopT1) of Yersinia enterocolitica serotype O:8 / biotype 1B (strain NCTC 13174 / 8081).